The chain runs to 418 residues: Galactooligosaccharides transport system permease protein GanP (418 aa).

The next 9 membrane-spanning stretches (helical) occupy residues 25–45 (IKGIVFLFLGASFFAVFGDLL), 65–85 (VFLLAEGIIAVIVTCFGLAVY), 129–149 (LFILIFAVIFPILFSFALAFT), 191–211 (VVWTLAASTLQVTLGIFLAII), 226–246 (ILILPWAVPGFVTILIFAGLF), 279–299 (LILMQGWLGFPYIFLVSTGVL), 323–343 (YITLPMVFIAMAPIIITQFTF), 357–379 (GGPAVTGSTAGGTDILVSWIYKL), and 388–408 (LAAALTILLSVFVISIALWQF). The region spanning 187–407 (LAWTVVWTLA…VFVISIALWQ (221 aa)) is the ABC transmembrane type-1 domain.

It belongs to the binding-protein-dependent transport system permease family. In terms of assembly, the complex is composed of two ATP-binding proteins (MsmX), two transmembrane proteins (GanP and GanQ) and a solute-binding protein (GanS).

The protein localises to the cell membrane. Involved in galactan degradation. Part of the ABC transporter complex GanPQS involved in the uptake of galactooligosaccharides. Responsible for the translocation of the substrate across the membrane. This is Galactooligosaccharides transport system permease protein GanP (ganP) from Bacillus subtilis (strain 168).